The chain runs to 327 residues: MAFTPFPPRQPSSSARLPLTLMTLDDWALATISGPDSEKYLQGQITADVSNLTDAQHLLAAHCDAKGKMWSNLRVFRRDGGFAWIERRSLRDVQLTELKKYAVFSKVTIAANDDLVLLGVAGFQARAALAPLFAALPDAATPVVSEDATSLLWFEHPGERFLLVTDVDTANRVTDALRGEAQLNNSQQWLALNIEAGLPVIDSANSGQFIPQATNLQALGGISFRKGCYTGQEMVARAKFRGANKRALWTLSGTASRVPEAGEDLELKMGDNWRRTGTVLAAVQLDDGQLLVQVVMNNDMEPDSIFRVRDDAGSLRIEPLPYSLEDA.

The folate site is built by W27 and W189.

This sequence belongs to the tRNA-modifying YgfZ family.

It localises to the cytoplasm. Its function is as follows. Folate-binding protein involved in regulating the level of ATP-DnaA and in the modification of some tRNAs. It is probably a key factor in regulatory networks that act via tRNA modification, such as initiation of chromosomal replication. The polypeptide is tRNA-modifying protein YgfZ (Klebsiella pneumoniae (strain 342)).